The primary structure comprises 314 residues: tRNA pseudouridine synthase B (314 aa).

Catalysis depends on D54, which acts as the Nucleophile.

Belongs to the pseudouridine synthase TruB family. Type 1 subfamily.

It carries out the reaction uridine(55) in tRNA = pseudouridine(55) in tRNA. Its function is as follows. Responsible for synthesis of pseudouridine from uracil-55 in the psi GC loop of transfer RNAs. The chain is tRNA pseudouridine synthase B from Cupriavidus metallidurans (strain ATCC 43123 / DSM 2839 / NBRC 102507 / CH34) (Ralstonia metallidurans).